Here is a 1067-residue protein sequence, read N- to C-terminus: Hemoglobin and hemoglobin-haptoglobin-binding protein B (1067 aa).

The first 24 residues, Met-1–Ala-24, serve as a signal peptide directing secretion. 6 consecutive repeat copies span residues Gln-26 to Asn-29, Gln-30 to Asn-33, Gln-34 to Asn-37, Gln-38 to Asn-41, Gln-42 to Asn-45, and Gln-46 to Asn-49. A 6 X 4 AA tandem repeats of Q-P-T-N region spans residues Gln-26–Asn-49. A compositionally biased stretch (low complexity) spans Gln-26–Asn-51. Residues Gln-26–Asn-53 form a disordered region. The TonB box signature appears at Glu-59–Ser-66. Residues Asn-71–Lys-196 form the TBDR plug domain. Residues Asp-204–Phe-1067 enclose the TBDR beta-barrel domain. Positions Asn-1050–Phe-1067 match the TonB C-terminal box motif.

It belongs to the TonB-dependent receptor family. Hemoglobin/haptoglobin binding protein subfamily.

It localises to the cell outer membrane. Its function is as follows. Acts as a receptor for hemoglobin or the hemoglobin/haptoglobin complex of the human host and is required for heme uptake. This chain is Hemoglobin and hemoglobin-haptoglobin-binding protein B (hgbB), found in Haemophilus influenzae.